Consider the following 206-residue polypeptide: SOSS complex subunit B2 (206 aa).

The segment at residues 26–89 (IVLEIGRVTK…SMWKGCLTLY (64 aa)) is a DNA-binding region (OB). Disordered stretches follow at residues 114–146 (EPNP…GTGT) and 166–206 (SYAG…AFKR). Polar residues predominate over residues 181 to 196 (LPGTANNQTVMTTISN).

The protein belongs to the SOSS-B family. SOSS-B2 subfamily. As to quaternary structure, component of the SOSS complex, composed of SOSS-B (SOSS-B1/NABP2 or SOSS-B2/NABP1), SOSS-A/INTS3 and SOSS-C/INIP. SOSS complexes containing SOSS-B1/NABP2 are more abundant than complexes containing SOSS-B2/NABP1.

The protein resides in the nucleus. Its function is as follows. Component of the SOSS complex, a multiprotein complex that functions downstream of the MRN complex to promote DNA repair and G2/M checkpoint. In the SOSS complex, acts as a sensor of single-stranded DNA that binds to single-stranded DNA, in particular to polypyrimidines. The SOSS complex associates with DNA lesions and influences diverse endpoints in the cellular DNA damage response including cell-cycle checkpoint activation, recombinational repair and maintenance of genomic stability. Required for efficient homologous recombination-dependent repair of double-strand breaks (DSBs) and ATM-dependent signaling pathways. This Bos taurus (Bovine) protein is SOSS complex subunit B2 (NABP1).